The primary structure comprises 53 residues: UPF0391 membrane protein BamMC406_6344 (53 aa).

Helical transmembrane passes span 5 to 25 (AIIFFVIAIIAAVFGFGGIAA) and 30 to 50 (IAKILFYIFVVIFLVTLLLGV).

It belongs to the UPF0391 family.

It localises to the cell membrane. In Burkholderia ambifaria (strain MC40-6), this protein is UPF0391 membrane protein BamMC406_6344.